Here is a 338-residue protein sequence, read N- to C-terminus: GTPase Obg (338 aa).

Residues 1–159 (MQFIDQAEIE…RRIRLELKLL (159 aa)) form the Obg domain. The OBG-type G domain maps to 160–328 (AEVGIIGLPN…MLQATWEQLD (169 aa)). GTP contacts are provided by residues 166–173 (GLPNAGKS), 191–195 (FTTLI), 213–216 (DIPG), 280–283 (NKLD), and 309–311 (SAV). Serine 173 and threonine 193 together coordinate Mg(2+).

It belongs to the TRAFAC class OBG-HflX-like GTPase superfamily. OBG GTPase family. Monomer. It depends on Mg(2+) as a cofactor.

Its subcellular location is the cytoplasm. In terms of biological role, an essential GTPase which binds GTP, GDP and possibly (p)ppGpp with moderate affinity, with high nucleotide exchange rates and a fairly low GTP hydrolysis rate. Plays a role in control of the cell cycle, stress response, ribosome biogenesis and in those bacteria that undergo differentiation, in morphogenesis control. In Gloeothece citriformis (strain PCC 7424) (Cyanothece sp. (strain PCC 7424)), this protein is GTPase Obg.